Here is a 37-residue protein sequence, read N- to C-terminus: Large ribosomal subunit protein bL36 (37 aa).

This sequence belongs to the bacterial ribosomal protein bL36 family.

The polypeptide is Large ribosomal subunit protein bL36 (Gloeobacter violaceus (strain ATCC 29082 / PCC 7421)).